The sequence spans 579 residues: Acyl-coenzyme A synthetase ACSM5, mitochondrial (579 aa).

Residues 1 to 26 (MRPWLRHLVLQALRNSRAFCGSHGKP) constitute a mitochondrion transit peptide. N6-acetyllysine; alternate is present on Lys-97. Lys-97 carries the N6-succinyllysine; alternate modification. Lys-152 is modified (N6-acetyllysine). 230-238 (TSGTTGAPK) contributes to the ATP binding site. Residue Lys-303 is modified to N6-acetyllysine; alternate. N6-succinyllysine; alternate is present on Lys-303. ATP contacts are provided by residues 368–373 (EGYGQS), Asp-455, Arg-470, and Lys-566.

The protein belongs to the ATP-dependent AMP-binding enzyme family. Mg(2+) serves as cofactor. The cofactor is Mn(2+). Detected in kidney and liver.

The protein localises to the mitochondrion matrix. It carries out the reaction a medium-chain fatty acid + ATP + CoA = a medium-chain fatty acyl-CoA + AMP + diphosphate. In terms of biological role, catalyzes the activation of fatty acids by CoA to produce an acyl-CoA, the first step in fatty acid metabolism. The protein is Acyl-coenzyme A synthetase ACSM5, mitochondrial (ACSM5) of Homo sapiens (Human).